The sequence spans 1034 residues: Glycine dehydrogenase (decarboxylating), mitochondrial (1034 aa).

Residues 1–63 constitute a mitochondrion transit peptide; that stretch reads MERARRLAML…LNGFGSQVRT (63 aa). N6-(pyridoxal phosphate)lysine is present on Lys-770.

This sequence belongs to the GcvP family. In terms of assembly, homodimer. The glycine cleavage system is composed of four proteins: P, T, L and H. Pyridoxal 5'-phosphate serves as cofactor.

The protein localises to the mitochondrion. It carries out the reaction N(6)-[(R)-lipoyl]-L-lysyl-[glycine-cleavage complex H protein] + glycine + H(+) = N(6)-[(R)-S(8)-aminomethyldihydrolipoyl]-L-lysyl-[glycine-cleavage complex H protein] + CO2. The glycine cleavage system catalyzes the degradation of glycine. The P protein binds the alpha-amino group of glycine through its pyridoxal phosphate cofactor; CO(2) is released and the remaining methylamine moiety is then transferred to the lipoamide cofactor of the H protein. The sequence is that of Glycine dehydrogenase (decarboxylating), mitochondrial (GDCSPA) from Flaveria trinervia (Clustered yellowtops).